The primary structure comprises 356 residues: S-adenosylmethionine:tRNA ribosyltransferase-isomerase (356 aa).

It belongs to the QueA family. Monomer.

Its subcellular location is the cytoplasm. The enzyme catalyses 7-aminomethyl-7-carbaguanosine(34) in tRNA + S-adenosyl-L-methionine = epoxyqueuosine(34) in tRNA + adenine + L-methionine + 2 H(+). It functions in the pathway tRNA modification; tRNA-queuosine biosynthesis. In terms of biological role, transfers and isomerizes the ribose moiety from AdoMet to the 7-aminomethyl group of 7-deazaguanine (preQ1-tRNA) to give epoxyqueuosine (oQ-tRNA). The chain is S-adenosylmethionine:tRNA ribosyltransferase-isomerase from Yersinia pestis.